An 810-amino-acid chain; its full sequence is Valine--tRNA ligase (810 aa).

The 'HIGH' region signature appears at 45 to 55 (PTISGQLHIGH). Residues 534–538 (KMSKS) carry the 'KMSKS' region motif. Residue lysine 537 coordinates ATP.

It belongs to the class-I aminoacyl-tRNA synthetase family. ValS type 2 subfamily. Monomer.

The protein resides in the cytoplasm. The catalysed reaction is tRNA(Val) + L-valine + ATP = L-valyl-tRNA(Val) + AMP + diphosphate. Catalyzes the attachment of valine to tRNA(Val). As ValRS can inadvertently accommodate and process structurally similar amino acids such as threonine, to avoid such errors, it has a 'posttransfer' editing activity that hydrolyzes mischarged Thr-tRNA(Val) in a tRNA-dependent manner. This chain is Valine--tRNA ligase, found in Ehrlichia ruminantium (strain Welgevonden).